Reading from the N-terminus, the 123-residue chain is Small ribosomal subunit protein uS12 (123 aa).

D89 is subject to 3-methylthioaspartic acid. A disordered region spans residues 102–123 (LDTSGVQDRRQRRSKYGAKRPK). Positions 111-123 (RQRRSKYGAKRPK) are enriched in basic residues.

The protein belongs to the universal ribosomal protein uS12 family. In terms of assembly, part of the 30S ribosomal subunit. Contacts proteins S8 and S17. May interact with IF1 in the 30S initiation complex.

With S4 and S5 plays an important role in translational accuracy. Its function is as follows. Interacts with and stabilizes bases of the 16S rRNA that are involved in tRNA selection in the A site and with the mRNA backbone. Located at the interface of the 30S and 50S subunits, it traverses the body of the 30S subunit contacting proteins on the other side and probably holding the rRNA structure together. The combined cluster of proteins S8, S12 and S17 appears to hold together the shoulder and platform of the 30S subunit. This chain is Small ribosomal subunit protein uS12, found in Lawsonia intracellularis (strain PHE/MN1-00).